Reading from the N-terminus, the 670-residue chain is DNA ligase (670 aa).

Residues 32–36, 81–82, and Glu-110 contribute to the NAD(+) site; these read DAYYD and SL. Residue Lys-112 is the N6-AMP-lysine intermediate of the active site. NAD(+)-binding residues include Arg-133, Glu-170, Lys-289, and Lys-313. Residues Cys-407, Cys-410, Cys-425, and Cys-431 each coordinate Zn(2+). Residues 590-670 form the BRCT domain; that stretch reads EDELRLKGQT…ELLVFLGLAG (81 aa).

This sequence belongs to the NAD-dependent DNA ligase family. LigA subfamily. The cofactor is Mg(2+). Mn(2+) serves as cofactor.

It catalyses the reaction NAD(+) + (deoxyribonucleotide)n-3'-hydroxyl + 5'-phospho-(deoxyribonucleotide)m = (deoxyribonucleotide)n+m + AMP + beta-nicotinamide D-nucleotide.. Functionally, DNA ligase that catalyzes the formation of phosphodiester linkages between 5'-phosphoryl and 3'-hydroxyl groups in double-stranded DNA using NAD as a coenzyme and as the energy source for the reaction. It is essential for DNA replication and repair of damaged DNA. This chain is DNA ligase, found in Shewanella denitrificans (strain OS217 / ATCC BAA-1090 / DSM 15013).